A 155-amino-acid chain; its full sequence is Protein FAM163B (155 aa).

A helical membrane pass occupies residues 6-26; that stretch reads VVITGGILATVILLCIIAVLC.

It belongs to the FAM163 family.

Its subcellular location is the membrane. The polypeptide is Protein FAM163B (fam163b) (Xenopus tropicalis (Western clawed frog)).